The chain runs to 240 residues: 2,3-bisphosphoglycerate-dependent phosphoglycerate mutase (240 aa).

Residues 5–12 (RHGESVWN), 18–19 (TG), R57, 84–87 (ERHY), K95, 111–112 (RR), and 180–181 (GN) contribute to the substrate site. The Tele-phosphohistidine intermediate role is filled by H6. E84 functions as the Proton donor/acceptor in the catalytic mechanism.

It belongs to the phosphoglycerate mutase family. BPG-dependent PGAM subfamily. As to quaternary structure, homodimer.

The catalysed reaction is (2R)-2-phosphoglycerate = (2R)-3-phosphoglycerate. It functions in the pathway carbohydrate degradation; glycolysis; pyruvate from D-glyceraldehyde 3-phosphate: step 3/5. Functionally, catalyzes the interconversion of 2-phosphoglycerate and 3-phosphoglycerate. The polypeptide is 2,3-bisphosphoglycerate-dependent phosphoglycerate mutase (Nitrosococcus oceani (strain ATCC 19707 / BCRC 17464 / JCM 30415 / NCIMB 11848 / C-107)).